Reading from the N-terminus, the 119-residue chain is Ergochrome gene cluster protein CPUR_05426 (119 aa).

It participates in pigment biosynthesis. Its function is as follows. Part of the ergochrome gene cluster responsible for the typical purple-black color of the ergot sclerotia. The ergochrome gene cluster produces several ergot pigments including the yellow ergochrome secalonic acid and its derivatives, as well as the red anthraquinones endocrocin and clavorubin. The pathway begins with the synthesis of atrochrysone thioester by the polyketide synthase (PKS) CPUR_05437. The atrochrysone carboxyl ACP thioesterase CPUR_05436 then breaks the thioester bond and releases the atrochrysone carboxylic acid from CPUR_05437. The atrochrysone carboxylic acid is then converted to atrochrysone which is further transformed into emodin anthrone. The next step is performed by the anthrone oxygenase CPUR_05434 that catalyzes the oxidation of emodinanthrone to emodin. Emodin is further modified to yield monodictyphenone via several steps involving CPUR_05427, CPUR_05428, CPUR_05429 and CPUR_05430. The short chain dehydrogenase/reductase CPUR_05418 then catalyzes the C-5 ketoreduction to give the xanthone skeleton of the monomeric units. Ergochromes formation requires further dimerization steps of different xanthone units, probably catalyzed by the cytochrome P450 monooxygenase CPUR_05419. CPUR_05425, CPUR_05426 and CPUR_05431 are unique to Claviceps, thus it is likely that they are involved in further modification of xanthone units or in their dimerization. The yellow ergochromes and the red anthraquinone pigments endocrocin and clavorubin are products from the same PKS derived precursors and the latter are likely shunt products in the pathway of xanthone biosynthesis. It is proposed that atrochrysone carboxylic acid released from the PKS CPUR_05437 can also be converted to endocrocin anthrone which is further oxidized into endocrocin by CPUR_05435. Endocrocin could be then modified to clavorubin, possibly by CPUR_05423 and CPUR_05431. Clavorubin is the principal anthraquinone metabolite produced by the cluster with a much higher yield compared to endocrocin. The polypeptide is Ergochrome gene cluster protein CPUR_05426 (Claviceps purpurea (strain 20.1) (Ergot fungus)).